The chain runs to 512 residues: Dihydroniloticin synthase CYP71CD2 (512 aa).

The chain crosses the membrane as a helical span at residues 1 to 21 (MNLQLDYFSITSFLVFLVVLF). Cysteine 449 contacts heme.

It belongs to the cytochrome P450 family. It depends on heme as a cofactor.

It localises to the membrane. The enzyme catalyses tirucalla-7,24-dien-3beta-ol + 2 reduced [NADPH--hemoprotein reductase] + 2 O2 = dihydroniloticin + 2 oxidized [NADPH--hemoprotein reductase] + 2 H2O + 2 H(+). The protein operates within secondary metabolite biosynthesis; terpenoid biosynthesis. Functionally, monooxygenase involved in the biosynthesis of limonoids triterpene natural products such as azadirachtin, an antifeedant widely used as bioinsecticide, and possessing many medicinal applications including anti-tumoral, anti-malarial, anti-rheumatic, antibacterial, anti-inflammatory, anti-pyretic and diuretic effects. Catalyzes the conversion of tirucalladienol to dihydroniloticin. This is Dihydroniloticin synthase CYP71CD2 from Azadirachta indica (Neem tree).